The sequence spans 236 residues: Potassium/proton antiporter CemA (236 aa).

A run of 4 helical transmembrane segments spans residues 12–32 (TVTS…TNHV), 114–134 (IANV…LLLG), 161–181 (IILF…EILI), and 196–216 (FIFL…KYWI).

The protein belongs to the CemA family.

Its subcellular location is the plastid. It is found in the chloroplast inner membrane. It carries out the reaction K(+)(in) + H(+)(out) = K(+)(out) + H(+)(in). In terms of biological role, contributes to K(+)/H(+) antiport activity by supporting proton efflux to control proton extrusion and homeostasis in chloroplasts in a light-dependent manner to modulate photosynthesis. Prevents excessive induction of non-photochemical quenching (NPQ) under continuous-light conditions. Indirectly promotes efficient inorganic carbon uptake into chloroplasts. The chain is Potassium/proton antiporter CemA from Chlorokybus atmophyticus (Soil alga).